Reading from the N-terminus, the 233-residue chain is Probable chemoreceptor glutamine deamidase CheD (233 aa).

Belongs to the CheD family.

It catalyses the reaction L-glutaminyl-[protein] + H2O = L-glutamyl-[protein] + NH4(+). Functionally, probably deamidates glutamine residues to glutamate on methyl-accepting chemotaxis receptors (MCPs), playing an important role in chemotaxis. This is Probable chemoreceptor glutamine deamidase CheD from Ralstonia nicotianae (strain ATCC BAA-1114 / GMI1000) (Ralstonia solanacearum).